Here is a 126-residue protein sequence, read N- to C-terminus: Large ribosomal subunit protein eL18 (126 aa).

This sequence belongs to the eukaryotic ribosomal protein eL18 family.

In Methanosarcina mazei (strain ATCC BAA-159 / DSM 3647 / Goe1 / Go1 / JCM 11833 / OCM 88) (Methanosarcina frisia), this protein is Large ribosomal subunit protein eL18.